Consider the following 235-residue polypeptide: 7-cyano-7-deazaguanine synthase (235 aa).

Phe-12 to Leu-22 contributes to the ATP binding site. Zn(2+)-binding residues include Cys-200, Cys-215, Cys-218, and Cys-221.

The protein belongs to the QueC family. Zn(2+) is required as a cofactor.

The enzyme catalyses 7-carboxy-7-deazaguanine + NH4(+) + ATP = 7-cyano-7-deazaguanine + ADP + phosphate + H2O + H(+). It functions in the pathway purine metabolism; 7-cyano-7-deazaguanine biosynthesis. Functionally, catalyzes the ATP-dependent conversion of 7-carboxy-7-deazaguanine (CDG) to 7-cyano-7-deazaguanine (preQ(0)). The polypeptide is 7-cyano-7-deazaguanine synthase (Methylibium petroleiphilum (strain ATCC BAA-1232 / LMG 22953 / PM1)).